A 208-amino-acid polypeptide reads, in one-letter code: MGGKDIDRLIEERRKQQNIEEILPELQLEERLIYANRTARVTKGGRRFSFSTLVVVGDRKGHVGFGHGKAKEVTLAIAKGIEKAKKNVIRVPIVDGTVPHDVIGTFGATKIIVLPARRGTGVVAGGAAKPVFELAGYTDVLTKIIGSTNPDNVVRAVFDALLQLKTPEQIAEERGLPVEEILRRYRRYALPKMNIKHYYPWRGIYEQT.

Residues 28–91 form the S5 DRBM domain; sequence LEERLIYANR…EKAKKNVIRV (64 aa).

It belongs to the universal ribosomal protein uS5 family. As to quaternary structure, part of the 30S ribosomal subunit. Contacts proteins S4 and S8.

Its function is as follows. With S4 and S12 plays an important role in translational accuracy. Located at the back of the 30S subunit body where it stabilizes the conformation of the head with respect to the body. This is Small ribosomal subunit protein uS5 from Aquifex aeolicus (strain VF5).